The chain runs to 635 residues: Biosynthetic arginine decarboxylase (635 aa).

N6-(pyridoxal phosphate)lysine is present on K100. 282-292 (IDIGGGLGVDY) is a binding site for substrate.

Belongs to the Orn/Lys/Arg decarboxylase class-II family. SpeA subfamily. The cofactor is Mg(2+). Pyridoxal 5'-phosphate serves as cofactor.

It catalyses the reaction L-arginine + H(+) = agmatine + CO2. It participates in amine and polyamine biosynthesis; agmatine biosynthesis; agmatine from L-arginine: step 1/1. In terms of biological role, catalyzes the biosynthesis of agmatine from arginine. This Pelobacter propionicus (strain DSM 2379 / NBRC 103807 / OttBd1) protein is Biosynthetic arginine decarboxylase.